A 293-amino-acid polypeptide reads, in one-letter code: Formamidopyrimidine-DNA glycosylase (293 aa).

Catalysis depends on proline 2, which acts as the Schiff-base intermediate with DNA. The Proton donor role is filled by glutamate 3. Catalysis depends on lysine 58, which acts as the Proton donor; for beta-elimination activity. The DNA site is built by histidine 104, arginine 123, and lysine 166. Residues 257–293 (QVYDREGEPCRTDGCGGVVKRFVQNGRSTFWCPKCQR) form an FPG-type zinc finger. The active-site Proton donor; for delta-elimination activity is arginine 283.

This sequence belongs to the FPG family. In terms of assembly, monomer. Zn(2+) is required as a cofactor.

The enzyme catalyses Hydrolysis of DNA containing ring-opened 7-methylguanine residues, releasing 2,6-diamino-4-hydroxy-5-(N-methyl)formamidopyrimidine.. The catalysed reaction is 2'-deoxyribonucleotide-(2'-deoxyribose 5'-phosphate)-2'-deoxyribonucleotide-DNA = a 3'-end 2'-deoxyribonucleotide-(2,3-dehydro-2,3-deoxyribose 5'-phosphate)-DNA + a 5'-end 5'-phospho-2'-deoxyribonucleoside-DNA + H(+). Functionally, involved in base excision repair of DNA damaged by oxidation or by mutagenic agents. Acts as a DNA glycosylase that recognizes and removes damaged bases. Has a preference for oxidized purines, such as 7,8-dihydro-8-oxoguanine (8-oxoG). Has AP (apurinic/apyrimidinic) lyase activity and introduces nicks in the DNA strand. Cleaves the DNA backbone by beta-delta elimination to generate a single-strand break at the site of the removed base with both 3'- and 5'-phosphates. The polypeptide is Formamidopyrimidine-DNA glycosylase (Bradyrhizobium sp. (strain BTAi1 / ATCC BAA-1182)).